We begin with the raw amino-acid sequence, 283 residues long: MKILLIIGSTGVGKTDLSINYSKKYNAPVVVLDRIQCFPELSITSGRPDESEYFGSKRIYLTDLLVEPGNENIKKTFYVNKLINILNEIKNNYDTQNLPNEKGYGCIFEGGSISLLKELLTKINKLPYKITCVIYIRPSDSIDNHKLYKAKIFKRVSQMLFPTEEGNDSQILEVKRILNKGKTVNAQGEINLEYYEKIKQVLISLVGLVGIEDVIHFLDKQYDQKNITSKLDPNYLNEIQSQLIETITLAHYNYALSQIELIDSLIKQLPKSIEYCLKNIEIN.

It belongs to the isopentenyl transferase family.

The catalysed reaction is dimethylallyl diphosphate + AMP = N(6)-(dimethylallyl)adenosine 5'-phosphate + diphosphate. In terms of biological role, transfers dimethylallyl groups to AMP as part of the biosynthesis of cytokinin phytohormones like isopentenyl adenine or discadenine which controle spore formation and viability. The protein is Adenylate dimethylallyltransferase (iptA) of Dictyostelium discoideum (Social amoeba).